Reading from the N-terminus, the 642-residue chain is Acid beta-fructofuranosidase (642 aa).

Over 1 to 22 the chain is Cytoplasmic; the sequence is MRNDSPYTPLLNASHNNHRRRE. Positions 1–95 are cleaved as a propeptide — removed in mature form; that stretch reads MRNDSPYTPL…LSGNLVGEGG (95 aa). A helical; Signal-anchor for type II membrane protein transmembrane segment spans residues 23-43; that stretch reads LLLLFSGLLLLASIIAFSAYI. The Lumenal segment spans residues 44–642; the sequence is AQPHADADVS…YHPDQKRQTS (599 aa). An N-linked (GlcNAc...) asparagine glycan is attached at Asn100. Substrate contacts are provided by residues 119 to 122, Gln138, Trp146, 181 to 182, and 245 to 246; these read WMND, WT, and RD. Residue Asp122 is part of the active site. Asn267 carries N-linked (GlcNAc...) asparagine glycosylation. Substrate-binding residues include Glu300 and Asp333. An intrachain disulfide couples Cys490 to Cys538. Residues Asn491 and Asn615 are each glycosylated (N-linked (GlcNAc...) asparagine).

It belongs to the glycosyl hydrolase 32 family. In terms of assembly, may be present in two forms, a 70 kDa monomer and a heterodimer of the 30 kDa and 38 kDa subunits. The ratio of the levels of the two forms within cells appears to be regulated developmentally.

It is found in the membrane. It localises to the vacuole. The protein localises to the vacuole lumen. It carries out the reaction Hydrolysis of terminal non-reducing beta-D-fructofuranoside residues in beta-D-fructofuranosides.. It functions in the pathway glycan biosynthesis; sucrose metabolism. In Vicia faba (Broad bean), this protein is Acid beta-fructofuranosidase (VCINV).